We begin with the raw amino-acid sequence, 224 residues long: ATP synthase subunit b (224 aa).

Residues 2-22 (TPSLGLIFWQSVIFLISFIIL) form a helical membrane-spanning segment.

The protein belongs to the ATPase B chain family. In terms of assembly, F-type ATPases have 2 components, F(1) - the catalytic core - and F(0) - the membrane proton channel. F(1) has five subunits: alpha(3), beta(3), gamma(1), delta(1), epsilon(1). F(0) has three main subunits: a(1), b(2) and c(10-14). The alpha and beta chains form an alternating ring which encloses part of the gamma chain. F(1) is attached to F(0) by a central stalk formed by the gamma and epsilon chains, while a peripheral stalk is formed by the delta and b chains.

It localises to the cell membrane. Its function is as follows. F(1)F(0) ATP synthase produces ATP from ADP in the presence of a proton or sodium gradient. F-type ATPases consist of two structural domains, F(1) containing the extramembraneous catalytic core and F(0) containing the membrane proton channel, linked together by a central stalk and a peripheral stalk. During catalysis, ATP synthesis in the catalytic domain of F(1) is coupled via a rotary mechanism of the central stalk subunits to proton translocation. Functionally, component of the F(0) channel, it forms part of the peripheral stalk, linking F(1) to F(0). This Karelsulcia muelleri (strain GWSS) (Sulcia muelleri) protein is ATP synthase subunit b.